Reading from the N-terminus, the 457-residue chain is Phenylalanine-4-hydroxylase (457 aa).

An ACT domain is found at 31 to 108; the sequence is TIVFTLREKA…EKKVLVQDWN (78 aa). Fe cation-binding residues include histidine 285, histidine 290, and glutamate 330.

Belongs to the biopterin-dependent aromatic amino acid hydroxylase family. Homotetramer. Fe(2+) serves as cofactor. In terms of tissue distribution, expressed in the seam cells of the lateral hypodermis, in the ventral hypodermis and in the hyp7 hypodermal syncytium, in hypodermal cells in the tail and in body wall muscle cells (at protein level).

The protein localises to the cytoplasm. The enzyme catalyses (6R)-L-erythro-5,6,7,8-tetrahydrobiopterin + L-phenylalanine + O2 = (4aS,6R)-4a-hydroxy-L-erythro-5,6,7,8-tetrahydrobiopterin + L-tyrosine. It catalyses the reaction (6R)-L-erythro-5,6,7,8-tetrahydrobiopterin + L-tryptophan + O2 = 5-hydroxy-L-tryptophan + (4aS,6R)-4a-hydroxy-L-erythro-5,6,7,8-tetrahydrobiopterin. It functions in the pathway amino-acid degradation; L-phenylalanine degradation; acetoacetate and fumarate from L-phenylalanine: step 1/6. Its activity is regulated as follows. Inhibited by tetrahydrobiopterin. Unlike its mammalian orthologs, pah-1 does not exhibit allosteric binding behavior for phenylalanine. In terms of biological role, catalyzes the hydroxylation of L-phenylalanine to L-tyrosine. Catalyzes the hydroxylation of tryptophan to 5-hydroxy-L-tryptophan. Plays a role in the biosynthesis of a melanin-like cuticle pigment. In Caenorhabditis elegans, this protein is Phenylalanine-4-hydroxylase.